A 637-amino-acid polypeptide reads, in one-letter code: MGKVIGIDLGTTNSCVAVMDGKSPRVIENAEGMRTTPSIVALTDDDERLVGQPAKRQAVTNPEKTIFAVKRLIGRRYDDPTVAKDKDLVPYKIVKASNGDAWVEADGKIYSPSQISAFILQKMKETAEAHLGQKVDQAVITVPAYFNDAQRQATKDAGKIAGLEVLRIINEPTAAALAYGLDKAKQGTIAVYDLGGGTFDVSVLEIGDGVFEVKSTNGDTFLGGEDFDMRLVGYLADEFQKEQGINLRNDKLALQRLKEAAEKAKIELSSTTQTEINLPFITADASGPKHLTMKLTRAKFEALVDDLVQKTIEPCRKALKDAGLSAGEISEVVLVGGMTRMPKIQEVVKQFFGKEPHKGVNPDEVVAIGAAIQAGVLQGDVKDVLLLDVTPLSLGIETLGGVFTRIIERNTTIPTKKSQVFSTAEDNQNAVTIRVFQGEREMAADNKALGQFDLMGIPPAPRGMPQIEVTFDIDANGIVNVSAKDKATGKEQQIRIQASGGLSESEIEKMVKEAEANAAEDKKRREAVDAKNHADALVHSTEKALAEHGSKVGEGERKAIEDALADLKEALKGDDSEAIKAKSNTLAQASMKLGEAMYQQQAEGDAARDAAQDAAKDDVVDAEFTEVDDDKNDKKSA.

Thr198 is modified (phosphothreonine; by autocatalysis). The interval 597-637 (MYQQQAEGDAARDAAQDAAKDDVVDAEFTEVDDDKNDKKSA) is disordered. The segment covering 605-619 (DAARDAAQDAAKDDV) has biased composition (basic and acidic residues). The span at 620–630 (VDAEFTEVDDD) shows a compositional bias: acidic residues.

Belongs to the heat shock protein 70 family.

Acts as a chaperone. The chain is Chaperone protein DnaK from Afipia carboxidovorans (strain ATCC 49405 / DSM 1227 / KCTC 32145 / OM5) (Oligotropha carboxidovorans).